The primary structure comprises 422 residues: Dioxygenase str8 (422 aa).

Zn(2+) contacts are provided by Cys73, Cys75, Cys78, and His119. Fe cation-binding residues include His243, Asp245, and His382.

Belongs to the gamma-BBH/TMLD family. Fe(2+) is required as a cofactor.

Its pathway is mycotoxin biosynthesis. Functionally, dioxygenase; part of the gene cluster that mediates the biosynthesis of strobilurin A, an antifungal polyketide that contains a key beta-methoxyacrylate toxophore that targets the complex III of the mitochondrial electron transport chain. Strobilurin biosynthesis begins with construction of benzoyl CoA by step-wise elimination of ammonia from phenylalanine by the phenylalanine ammonia-lyase str11, oxygenation by str8 and retro-Claisen reaction to form benzoic acid, which is activated to its CoA thiolester benzoyl CoA by the dedicated CoA ligase str10. Benzoyl CoA forms the starter unit for the highly reducing polyketide synthase stpks1 that produces the polyketide prestrobilutin A. The FAD-dependent oxygenase str9 then catalyzes the key oxidative rearrangement responsible for the creation of the beta-methoxyacrylate toxophore. Str9 performs epoxidation of the 2,3 olefin of prestrobilutin A, followed by Meinwald rearrangement to furnish the aldehyde intermediate. Rapid enolization of the aldehyde intermediate would give the beta-methoxyacrylate skeleton and methylations catalyzed by str2 and str3 complete the synthesis and lead to the production of strobilurin A. The short-chain dehydrogenase stl2 and the dehydrogenase str4 play a role in the shunt pathway leading to the production of bolineol. The cluster encodes no obvious halogenase gene that could be involved in production of strobilurin B, nor any obvious dimethylallyl-transferase that could be involved in the production of strobilurin G. It is possible that unknown proteins encoded in, or near, the cluster (such as str1 or stl1) may form new classes of halogenases or dimethylally-transferases, or that the responsible genes are located elsewhere on the genome. Similarly, proteins encoded by str5/str6 hydrolases appear to have no chemical role in the biosynthesis of strobilurin A. Finally, no obvious self-resistance gene is found within the cluster. The protein is Dioxygenase str8 of Strobilurus tenacellus.